Here is a 280-residue protein sequence, read N- to C-terminus: uncharacterized protein (280 aa).

6 consecutive transmembrane segments (helical) span residues 46 to 66 (LIFL…FVCT), 81 to 101 (IACS…FLIP), 114 to 134 (FFYL…SWVV), 137 to 157 (VWHF…IKLQ), 170 to 190 (ILFI…LLEL), and 225 to 245 (IVAC…ALIV). The segment at 258 to 280 (ESGSIEKKNKSSPPPRTWQSNYQ) is disordered.

Belongs to the TatC family.

The protein localises to the mitochondrion membrane. This is an uncharacterized protein from Arabidopsis thaliana (Mouse-ear cress).